The sequence spans 372 residues: NAD(P)H-quinone oxidoreductase subunit 1 (372 aa).

Helical transmembrane passes span 27–47, 97–117, 128–148, 176–196, 204–224, 270–290, 308–328, and 351–371; these read LLWL…GVLV, LLFT…WLII, VGIG…GLLM, LALA…IDIV, FLSW…ICAL, LLVS…ELIA, SLGI…AILL, and ISLV…FAFG.

This sequence belongs to the complex I subunit 1 family. As to quaternary structure, NDH-1 is composed of at least 11 different subunits.

The protein localises to the cellular thylakoid membrane. The catalysed reaction is a plastoquinone + NADH + (n+1) H(+)(in) = a plastoquinol + NAD(+) + n H(+)(out). The enzyme catalyses a plastoquinone + NADPH + (n+1) H(+)(in) = a plastoquinol + NADP(+) + n H(+)(out). Functionally, NDH-1 shuttles electrons from an unknown electron donor, via FMN and iron-sulfur (Fe-S) centers, to quinones in the respiratory and/or the photosynthetic chain. The immediate electron acceptor for the enzyme in this species is believed to be plastoquinone. Couples the redox reaction to proton translocation, and thus conserves the redox energy in a proton gradient. The sequence is that of NAD(P)H-quinone oxidoreductase subunit 1 from Prochlorococcus marinus (strain SARG / CCMP1375 / SS120).